The following is a 340-amino-acid chain: Phosphate acyltransferase (340 aa).

Belongs to the PlsX family. In terms of assembly, homodimer. Probably interacts with PlsY.

The protein resides in the cytoplasm. The catalysed reaction is a fatty acyl-[ACP] + phosphate = an acyl phosphate + holo-[ACP]. It functions in the pathway lipid metabolism; phospholipid metabolism. Functionally, catalyzes the reversible formation of acyl-phosphate (acyl-PO(4)) from acyl-[acyl-carrier-protein] (acyl-ACP). This enzyme utilizes acyl-ACP as fatty acyl donor, but not acyl-CoA. The polypeptide is Phosphate acyltransferase (Pseudomonas syringae pv. tomato (strain ATCC BAA-871 / DC3000)).